The following is a 452-amino-acid chain: Probable intron-encoded endonuclease 2 (452 aa).

Helical transmembrane passes span 1–21 (MNIT…NRKN), 22–42 (IILM…LILV), and 57–77 (IYII…LVAF). Positions 1-80 (MNITLILFLI…LAILVAFYRL (80 aa)) are ndh-4L exon 1 encoded. A ndh-4L intron 1 encoded region spans residues 81–452 (INSPVKNPRS…SLEGGMNKNI (372 aa)).

The protein in the N-terminal section; belongs to the complex I subunit 4L family. This sequence in the C-terminal section; belongs to the LAGLIDADG endonuclease family.

The protein resides in the mitochondrion membrane. Its function is as follows. Mitochondrial DNA endonuclease involved in intron homing. This Neurospora crassa (strain ATCC 24698 / 74-OR23-1A / CBS 708.71 / DSM 1257 / FGSC 987) protein is Probable intron-encoded endonuclease 2.